The chain runs to 467 residues: Venom prothrombin activator pseutarin-C catalytic subunit (467 aa).

An N-terminal signal peptide occupies residues Met-1 to Ser-22. The propeptide occupies Asn-23 to Arg-40. The Gla domain maps to Ala-41–Asp-86. Glu-46, Glu-47, Glu-54, Glu-56, Glu-59, Glu-60, Glu-65, Glu-66, Glu-69, and Glu-72 each carry 4-carboxyglutamate. Residues Cys-57 and Cys-62 are joined by a disulfide bond. The region spanning Asp-86–Glu-122 is the EGF-like 1; calcium-binding domain. Cystine bridges form between Cys-90–Cys-101, Cys-95–Cys-110, Cys-112–Cys-121, Cys-129–Cys-140, Cys-136–Cys-149, Cys-151–Cys-164, Cys-172–Cys-329, Cys-216–Cys-221, Cys-236–Cys-252, Cys-377–Cys-391, and Cys-402–Cys-430. A glycan (O-linked (Hex...) serine) is linked at Ser-92. Positions Cys-129–Cys-164 constitute an EGF-like 2 domain. The propeptide at Arg-182–Arg-209 is activation peptide. One can recognise a Peptidase S1 domain in the interval Ile-210–Arg-454. The active-site Charge relay system is His-251. Asn-254 is a glycosylation site (N-linked (GlcNAc...) asparagine). Asp-309 functions as the Charge relay system in the catalytic mechanism. The active-site Charge relay system is the Ser-406.

Belongs to the peptidase S1 family. Snake venom subfamily. As to quaternary structure, heterodimer of a light and a heavy chains; disulfide-linked. Is associated with pseutarin-C non-catalytic subunit (AC Q7SZN0) in a non-covalent manner. Gamma-carboxyglutamate residues are formed by vitamin K dependent carboxylation. These residues are essential for the binding of calcium. Expressed by the venom gland.

The protein localises to the secreted. It catalyses the reaction Selective cleavage of Arg-|-Thr and then Arg-|-Ile bonds in prothrombin to form thrombin.. With respect to regulation, activated by calcium and negatively charged phospholipids. Functionally, snake prothrombin activator that attacks the hemostatic system of prey. This non-catalytic subunit is functionally similar to blood coagulation factor V. It serves as a critical cofactor for the prothrombinase activity of the catalytic subunit, which is similar to the blood coagulation factor X. The complex converts prothrombin to thrombin by sequential cleavage at two positions, Arg-320 followed by Arg-271. Cleavage at Arg-320 produces an active intermediate known as meizothrombin. Meizothrombin is the 'second' substrate for prothrombinase, and it docks in an altered manner to present the second cleavage site (271). Cleavage at Arg-271 releases active thrombin from its pro-fragment. This order of events is reversed if the protease component of prothrombinase is used on its own, suggesting that the 271 site is inherently more accessible to proteolysis. The complex converts prothrombin to thrombin in presence but also in the absence of membrane. The polypeptide is Venom prothrombin activator pseutarin-C catalytic subunit (Pseudonaja textilis (Eastern brown snake)).